The chain runs to 438 residues: uncharacterized protein (438 aa).

12 helical membrane-spanning segments follow: residues 22-42, 59-79, 89-109, 137-157, 174-194, 237-257, 258-278, 292-312, 330-350, 356-376, 380-400, and 418-438; these read VSPI…GGFG, SAAL…AGLF, IVKG…MLIA, MVMA…TPWG, FFVP…FLAF, LIYL…LGTK, HPSV…YPNV, AITV…LSGT, MGGF…FVLS, FGMV…PVEI, SIMG…VLLV, and AVIT…ITIL.

Belongs to the CitM (TC 2.A.11) transporter family.

Its subcellular location is the cell membrane. Transports the free citrate anion. This is an uncharacterized protein from Bacillus subtilis (strain 168).